Here is a 358-residue protein sequence, read N- to C-terminus: DNA integrity scanning protein DisA (358 aa).

Positions 6–144 constitute a DAC domain; that stretch reads RPTLREAVAR…RGERHVLTDS (139 aa). ATP-binding positions include G73, L91, and 104-108; that span reads TRHRS.

The protein belongs to the DisA family. As to quaternary structure, homooctamer. Mg(2+) serves as cofactor.

It carries out the reaction 2 ATP = 3',3'-c-di-AMP + 2 diphosphate. Its function is as follows. Participates in a DNA-damage check-point. DisA forms globular foci that rapidly scan along the chromosomes searching for lesions. Also has diadenylate cyclase activity, catalyzing the condensation of 2 ATP molecules into cyclic di-AMP (c-di-AMP). c-di-AMP likely acts as a signaling molecule that may couple DNA integrity with a cellular process. The sequence is that of DNA integrity scanning protein DisA from Mycobacterium tuberculosis (strain ATCC 25177 / H37Ra).